Reading from the N-terminus, the 425-residue chain is Nuclear pore complex-interacting protein family member B6 (425 aa).

Residues Ser-332–His-414 are disordered. The segment covering Glu-353–Glu-395 has biased composition (basic and acidic residues). The span at Lys-401–His-414 shows a compositional bias: basic residues.

It belongs to the NPIP family.

The polypeptide is Nuclear pore complex-interacting protein family member B6 (NPIPB6) (Homo sapiens (Human)).